The primary structure comprises 73 residues: Putative ORF9c protein (73 aa).

Residues 47–67 traverse the membrane as a helical segment; the sequence is AAVGELLLLEWLAMAVMLLLL.

The protein resides in the membrane. Its function is as follows. May induce apoptosis in cardiomyocytes when overexpressed ex-vivo. The polypeptide is Putative ORF9c protein (Homo sapiens (Human)).